Consider the following 488-residue polypeptide: Protein Notchless (488 aa).

The tract at residues 1–22 is disordered; that stretch reads MLAKKQKMQETDTEQEATPHTI. The segment at 19 to 101 is ubiquitin-like (UBL) domain; that stretch reads PHTIQARLVS…VIDIVYQPQA (83 aa). WD repeat units follow at residues 117–156, 159–198, 202–246, 249–287, 329–370, 373–412, 415–454, and 457–488; these read GHAE…PHFT, GHKQ…QKGR, GHKK…CLMN, GHTN…LCRT, LQES…CVER, GHQN…YMAT, GHVQ…LAQE, and GHAD…LWAY.

The protein belongs to the NLE1/RSA4 family. As to quaternary structure, interacts with Notch (via cytoplasmic domain). Associates with the pre-60S ribosomal particle.

It localises to the nucleus. Its subcellular location is the nucleolus. In terms of biological role, plays a role in regulating Notch activity. The chain is Protein Notchless from Drosophila melanogaster (Fruit fly).